Reading from the N-terminus, the 350-residue chain is Uroporphyrinogen decarboxylase (350 aa).

Substrate contacts are provided by residues 28 to 32 (RQAGR), phenylalanine 47, aspartate 78, tyrosine 155, serine 210, and histidine 325.

Belongs to the uroporphyrinogen decarboxylase family. In terms of assembly, homodimer.

The protein resides in the cytoplasm. The enzyme catalyses uroporphyrinogen III + 4 H(+) = coproporphyrinogen III + 4 CO2. It participates in porphyrin-containing compound metabolism; protoporphyrin-IX biosynthesis; coproporphyrinogen-III from 5-aminolevulinate: step 4/4. In terms of biological role, catalyzes the decarboxylation of four acetate groups of uroporphyrinogen-III to yield coproporphyrinogen-III. The protein is Uroporphyrinogen decarboxylase of Synechocystis sp. (strain ATCC 27184 / PCC 6803 / Kazusa).